The sequence spans 244 residues: Phosphoadenosine 5'-phosphosulfate reductase (244 aa).

The active-site Nucleophile; cysteine thiosulfonate intermediate is cysteine 239.

This sequence belongs to the PAPS reductase family. CysH subfamily.

Its subcellular location is the cytoplasm. The catalysed reaction is [thioredoxin]-disulfide + sulfite + adenosine 3',5'-bisphosphate + 2 H(+) = [thioredoxin]-dithiol + 3'-phosphoadenylyl sulfate. It participates in sulfur metabolism; hydrogen sulfide biosynthesis; sulfite from sulfate: step 3/3. In terms of biological role, catalyzes the formation of sulfite from phosphoadenosine 5'-phosphosulfate (PAPS) using thioredoxin as an electron donor. In Shigella boydii serotype 4 (strain Sb227), this protein is Phosphoadenosine 5'-phosphosulfate reductase.